A 309-amino-acid chain; its full sequence is Homoserine O-succinyltransferase (309 aa).

The Acyl-thioester intermediate role is filled by Cys142. Residues Lys163 and Ser192 each coordinate substrate. Catalysis depends on His235, which acts as the Proton acceptor. Glu237 is a catalytic residue. Arg249 is a substrate binding site.

This sequence belongs to the MetA family. In terms of assembly, homodimer.

It localises to the cytoplasm. The enzyme catalyses L-homoserine + succinyl-CoA = O-succinyl-L-homoserine + CoA. The protein operates within amino-acid biosynthesis; L-methionine biosynthesis via de novo pathway; O-succinyl-L-homoserine from L-homoserine: step 1/1. Transfers a succinyl group from succinyl-CoA to L-homoserine, forming succinyl-L-homoserine. This is Homoserine O-succinyltransferase from Escherichia coli (strain SE11).